Reading from the N-terminus, the 319-residue chain is 4-hydroxy-3-methylbut-2-enyl diphosphate reductase (319 aa).

Residue Cys-17 coordinates [4Fe-4S] cluster. His-46 and His-79 together coordinate (2E)-4-hydroxy-3-methylbut-2-enyl diphosphate. His-46 and His-79 together coordinate dimethylallyl diphosphate. His-46 and His-79 together coordinate isopentenyl diphosphate. Cys-101 contributes to the [4Fe-4S] cluster binding site. His-129 is a (2E)-4-hydroxy-3-methylbut-2-enyl diphosphate binding site. His-129 lines the dimethylallyl diphosphate pocket. Position 129 (His-129) interacts with isopentenyl diphosphate. Glu-131 acts as the Proton donor in catalysis. Thr-170 contributes to the (2E)-4-hydroxy-3-methylbut-2-enyl diphosphate binding site. [4Fe-4S] cluster is bound at residue Cys-200. Residues Ser-228, Ser-229, Asn-230, and Ser-273 each contribute to the (2E)-4-hydroxy-3-methylbut-2-enyl diphosphate site. Dimethylallyl diphosphate is bound by residues Ser-228, Ser-229, Asn-230, and Ser-273. Positions 228, 229, 230, and 273 each coordinate isopentenyl diphosphate.

Belongs to the IspH family. [4Fe-4S] cluster serves as cofactor.

It catalyses the reaction isopentenyl diphosphate + 2 oxidized [2Fe-2S]-[ferredoxin] + H2O = (2E)-4-hydroxy-3-methylbut-2-enyl diphosphate + 2 reduced [2Fe-2S]-[ferredoxin] + 2 H(+). The catalysed reaction is dimethylallyl diphosphate + 2 oxidized [2Fe-2S]-[ferredoxin] + H2O = (2E)-4-hydroxy-3-methylbut-2-enyl diphosphate + 2 reduced [2Fe-2S]-[ferredoxin] + 2 H(+). It functions in the pathway isoprenoid biosynthesis; dimethylallyl diphosphate biosynthesis; dimethylallyl diphosphate from (2E)-4-hydroxy-3-methylbutenyl diphosphate: step 1/1. The protein operates within isoprenoid biosynthesis; isopentenyl diphosphate biosynthesis via DXP pathway; isopentenyl diphosphate from 1-deoxy-D-xylulose 5-phosphate: step 6/6. Catalyzes the conversion of 1-hydroxy-2-methyl-2-(E)-butenyl 4-diphosphate (HMBPP) into a mixture of isopentenyl diphosphate (IPP) and dimethylallyl diphosphate (DMAPP). Acts in the terminal step of the DOXP/MEP pathway for isoprenoid precursor biosynthesis. The chain is 4-hydroxy-3-methylbut-2-enyl diphosphate reductase from Cereibacter sphaeroides (strain ATCC 17025 / ATH 2.4.3) (Rhodobacter sphaeroides).